The sequence spans 161 residues: pEARLI1-like lipid transfer protein 1 (161 aa).

The signal sequence occupies residues M1–A25. Residues P32 to V39 form an A-1 repeat. The tract at residues P32–N76 is disordered. Over residues S33–T70 the composition is skewed to pro residues. Residues P34–C49 form a 2 X 8 AA tandem repeats A of P-S-P-K-P-K-P-V region. The stretch at P40–V47 is one A-2 repeat.

It belongs to the plant LTP family. PEARLI1 subfamily. Self-interacts and binds to DIR1. Interacts with PDLP1.

The protein resides in the secreted. Its subcellular location is the cell wall. The protein localises to the endoplasmic reticulum. It is found in the cell junction. It localises to the plasmodesma. The protein resides in the plastid. Its subcellular location is the chloroplast. In terms of biological role, probable lipid transfer protein (LTP). Seems to control the flowering process and lignin synthesis. Together with DIR1, required for glycerol-3-phosphate- (G3P) and azelaic acid- (AA) induced systemic acquired resistance (SAR). Component of plant systemic immunity involved in priming defenses in a AA-dependent manner, by modulating production and/or translocation of a mobile signal(s) during SAR. Confers resistance to Botrytis cinerea and Pseudomonas syringae pv. tomato DC3000 and PmaDG3. May be involved in induced systemic resistance (ISR) mediated by non-pathogenic bacteria (e.g. P. fluorescens GM30). Prevents electrolyte leakage during freezing damage. The sequence is that of pEARLI1-like lipid transfer protein 1 (AZI1) from Arabidopsis thaliana (Mouse-ear cress).